The sequence spans 251 residues: Hydroxyacylglutathione hydrolase (251 aa).

Zn(2+) contacts are provided by His-53, His-55, Asp-57, His-58, His-110, Asp-127, and His-165.

Belongs to the metallo-beta-lactamase superfamily. Glyoxalase II family. As to quaternary structure, monomer. It depends on Zn(2+) as a cofactor.

It carries out the reaction an S-(2-hydroxyacyl)glutathione + H2O = a 2-hydroxy carboxylate + glutathione + H(+). Its pathway is secondary metabolite metabolism; methylglyoxal degradation; (R)-lactate from methylglyoxal: step 2/2. In terms of biological role, thiolesterase that catalyzes the hydrolysis of S-D-lactoyl-glutathione to form glutathione and D-lactic acid. This Yersinia pestis protein is Hydroxyacylglutathione hydrolase.